A 349-amino-acid chain; its full sequence is Arginine kinase (349 aa).

Residues 3-85 (DLAELWEKVS…LGPVILDYHK (83 aa)) enclose the Phosphagen kinase N-terminal domain. 58–62 (GVGVY) contributes to the substrate binding site. Positions 113 to 349 (WIVSTRVRVG…EEIIKLEKAA (237 aa)) constitute a Phosphagen kinase C-terminal domain. ATP-binding positions include 116–120 (STRVR) and His-179. Residue Glu-219 coordinates substrate. Arg-223 lines the ATP pocket. Position 265 (Cys-265) interacts with substrate. ATP-binding positions include 274–278 (RASVH) and 302–307 (RGIHGE). A substrate-binding site is contributed by Glu-307.

It belongs to the ATP:guanido phosphotransferase family.

The catalysed reaction is L-arginine + ATP = N(omega)-phospho-L-arginine + ADP + H(+). The polypeptide is Arginine kinase (Liolophura japonica (Chiton)).